The chain runs to 1888 residues: Zinc finger protein 106 (1888 aa).

The C2H2-type 1; atypical zinc finger occupies 5-29 (RKCILCHIVYGSKKEMDEHMRSMLH). The segment at 43–67 (HECRVCRVTEVGLSAYAKHISGQLH) adopts a C2H2-type 2; atypical zinc-finger fold. The tract at residues 68-187 (KDNVDAQERE…GPRGSSVWHK (120 aa)) is disordered. A compositionally biased stretch (acidic residues) spans 75–89 (EREDDGKEEEEEEYF). 3 stretches are compositionally biased toward basic and acidic residues: residues 90 to 108 (DKELVQLIQERKEQSRQDE), 118 to 138 (SDDRQPQWRREDRIPYQDRES), and 150 to 160 (PQRDWKWEKDG). Lys91 participates in a covalent cross-link: Glycyl lysine isopeptide (Lys-Gly) (interchain with G-Cter in SUMO2). Lys155 is covalently cross-linked (Glycyl lysine isopeptide (Lys-Gly) (interchain with G-Cter in SUMO2)). Residues 161-175 (FNSTRKNSFPHSLRN) are compositionally biased toward polar residues. Glycyl lysine isopeptide (Lys-Gly) (interchain with G-Cter in SUMO2) cross-links involve residues Lys265 and Lys309. 2 disordered regions span residues 287 to 326 (KKSNKPSKYSQERCKWQRQDRDKAAKYRSPPEGYASDTFP) and 338 to 362 (RESQTTKQTDTAASKINGKNGTKAR). A compositionally biased stretch (basic and acidic residues) spans 296–311 (SQERCKWQRQDRDKAA). Over residues 342–357 (TTKQTDTAASKINGKN) the composition is skewed to polar residues. Residues Lys375, Lys384, Lys390, Lys435, Lys469, and Lys479 each participate in a glycyl lysine isopeptide (Lys-Gly) (interchain with G-Cter in SUMO2) cross-link. Disordered stretches follow at residues 410-437 (KPVDKTSNPPVIKTQKAGPPGSPSHKAI) and 453-525 (TEQS…TSKS). Positions 481–491 (GPHKQNLKNRS) are enriched in basic residues. Residues 507–525 (LLNTSTLEGSHGSSYTSKS) are compositionally biased toward polar residues. Glycyl lysine isopeptide (Lys-Gly) (interchain with G-Cter in SUMO2) cross-links involve residues Lys524, Lys534, and Lys544. The interval 537 to 617 (KTVSGTQKEP…SAMTSDAENH (81 aa)) is disordered. The span at 551–572 (NNTSQKAQDTVLQCPKTLQNPL) shows a compositional bias: polar residues. Lys577 participates in a covalent cross-link: Glycyl lysine isopeptide (Lys-Gly) (interchain with G-Cter in SUMO2). Residues 577-593 (KRMENDAKESSVEESAK) show a composition bias toward basic and acidic residues. A compositionally biased stretch (polar residues) spans 597–613 (SIESQPHSAGNSAMTSD). A Glycyl lysine isopeptide (Lys-Gly) (interchain with G-Cter in SUMO2) cross-link involves residue Lys620. The segment at 635–661 (STHTVDKEQGSQIPGTPENLSTSPRNS) is disordered. The span at 644–661 (GSQIPGTPENLSTSPRNS) shows a compositional bias: polar residues. 2 positions are modified to phosphoserine: Ser657 and Ser677. Residues Lys687, Lys700, Lys721, Lys738, Lys758, Lys792, and Lys824 each participate in a glycyl lysine isopeptide (Lys-Gly) (interchain with G-Cter in SUMO2) cross-link. The tract at residues 696 to 728 (NNLVKSDGPFETESFEDTSLDTELQKPDLNNQP) is disordered. 4 positions are modified to phosphoserine: Ser876, Ser878, Ser881, and Ser909. The disordered stretch occupies residues 894-920 (TGEGTGKENEAQQSPSPNTALSAAQSQ). A compositionally biased stretch (polar residues) spans 904 to 920 (AQQSPSPNTALSAAQSQ). Residue Lys921 forms a Glycyl lysine isopeptide (Lys-Gly) (interchain with G-Cter in SUMO2) linkage. Residue Ser953 is modified to Phosphoserine. Over residues 968–986 (ARDLHSQERSTPLSERHAQ) the composition is skewed to basic and acidic residues. Disordered regions lie at residues 968 to 1064 (ARDL…ERSQ), 1281 to 1461 (EQGN…SKKD), and 1468 to 1487 (QNPIETSRSGCDEVSSTSEL). Low complexity predominate over residues 992–1008 (GNSLSSNASSGHAVSSL). Positions 1013 to 1022 (TDSSCTSGAE) are enriched in polar residues. At Thr1036 the chain carries Phosphothreonine. Residues Ser1040, Ser1041, and Ser1046 each carry the phosphoserine modification. Residues 1050–1060 (KNKRRKIKGKK) are compositionally biased toward basic residues. A compositionally biased stretch (polar residues) spans 1281–1296 (EQGNSRSKGNSPSCQS). Phosphoserine occurs at positions 1291, 1293, and 1296. A Glycyl lysine isopeptide (Lys-Gly) (interchain with G-Cter in SUMO2) cross-link involves residue Lys1310. Residues 1312–1321 (SSGSEACSSS) show a composition bias toward low complexity. At Ser1313 the chain carries Phosphoserine. Lys1335 participates in a covalent cross-link: Glycyl lysine isopeptide (Lys-Gly) (interchain with G-Cter in SUMO2). Over residues 1338–1354 (QSPADQPEQQAESTLAS) the composition is skewed to polar residues. A Phosphoserine modification is found at Ser1339. Over residues 1360–1373 (SKKKKKLRKKKTLR) the composition is skewed to basic residues. Ser1381 carries the phosphoserine modification. Thr1383 carries the phosphothreonine modification. Residues Lys1391, Lys1403, Lys1406, and Lys1460 each participate in a glycyl lysine isopeptide (Lys-Gly) (interchain with G-Cter in SUMO2) cross-link. The span at 1450 to 1461 (GDEKPDSPSKKD) shows a compositional bias: basic and acidic residues. The segment covering 1470-1487 (PIETSRSGCDEVSSTSEL) has biased composition (polar residues). Ser1474 carries the phosphoserine modification. Residues Lys1492 and Lys1509 each participate in a glycyl lysine isopeptide (Lys-Gly) (interchain with G-Cter in SUMO2) cross-link. The interval 1509–1531 (KASKHSSEISSEPGDDEEPTEGS) is disordered. WD repeat units follow at residues 1534 to 1573 (GHQAAVNAIQIFGNFLYTCSADTTVRVYNLVSRKCVGVFE), 1575 to 1618 (HTSK…EQLQ), 1659 to 1700 (HGPR…LLRT), 1703 to 1742 (GHSKTVLCMKVVNDLVFSGSSDQSVHAHNIHTGELVRIYK), 1743 to 1780 (GHNHAVTVVNILGKVMVTACLDKFVRVYELQSHDRLQV), and 1783 to 1820 (GHKDMIMCMTIHKSVIYTGCYDGSIQAVRLNLMQNYRC). Residue Lys1590 forms a Glycyl lysine isopeptide (Lys-Gly) (interchain with G-Cter in SUMO2) linkage. Residue Lys1742 forms a Glycyl lysine isopeptide (Lys-Gly) (interchain with G-Cter in SUMO2) linkage. A C2H2-type 3; atypical zinc finger spans residues 1818–1843 (YRCWWYGCTLIFGVVDHLKQHLLTDH). A Glycyl lysine isopeptide (Lys-Gly) (interchain with G-Cter in SUMO2) cross-link involves residue Lys1869.

As to quaternary structure, interacts with KNOP1. Interacts with TARDBP and NUP107. Interacts (via N-terminus) with RBM39. Interacts with the SH3 domains of FYN and GRB2. Phosphorylated by FYN in vitro. Widely expressed, with strongest expression in skeletal muscle, heart and brain (at protein level). Detected in spinal cord motor neurons.

Its subcellular location is the nucleus. It localises to the nucleolus. The protein resides in the nucleus speckle. In terms of biological role, RNA-binding protein. Specifically binds to 5'-GGGGCC-3' sequence repeats in RNA. Essential for maintenance of peripheral motor neuron and skeletal muscle function. Required for normal expression and/or alternative splicing of a number of genes in spinal cord and skeletal muscle, including the neurite outgrowth inhibitor RTN4. Also contributes to normal mitochondrial respiratory function in motor neurons, via an unknown mechanism. This chain is Zinc finger protein 106 (Znf106), found in Mus musculus (Mouse).